Reading from the N-terminus, the 550-residue chain is Vacuolar protein 8 (550 aa).

A lipid anchor (N-myristoyl glycine) is attached at G2. S-palmitoyl cysteine attachment occurs at residues C4 and C7. ARM repeat units lie at residues 75–114 (TEKDVREVDRETIEPVLFLLQSPDAEIQRAASVALGNLAV), 116–155 (AENKALVVKLNGLDLLIRQMMSPHVEVQCNAVGCITNLAT), 157–196 (DENKSKIAHSGALGPLTRLAKSKDIRVQRNATGALLNMTH), 198–237 (YENRQQLVSAGTIPVLVSLLPSSDTDVQYYCTTSISNIAV), 241–280 (HRKRLAQSEPKLVRSLIQLMDTSSPKVQCQAALALRNLAS), 282–321 (ERYQIEIVQSNALPSLLRLLRSSYLPLILASVACIRNISI), 323–363 (PLNE…NLAA), and 454–493 (FIECWDSPAGGIHGYLVRFLSSEDSTFAHIAAWTIVQLLE). At T548 the chain carries Phosphothreonine. A Phosphoserine modification is found at S550.

Belongs to the beta-catenin family.

The protein localises to the golgi apparatus membrane. It is found in the vacuole membrane. Its function is as follows. Functions in both vacuole inheritance and protein targeting from the cytoplasm to vacuole. The protein is Vacuolar protein 8 (vac8) of Schizosaccharomyces pombe (strain 972 / ATCC 24843) (Fission yeast).